We begin with the raw amino-acid sequence, 459 residues long: Argininosuccinate lyase (459 aa).

Belongs to the lyase 1 family. Argininosuccinate lyase subfamily.

It is found in the cytoplasm. The catalysed reaction is 2-(N(omega)-L-arginino)succinate = fumarate + L-arginine. The protein operates within amino-acid biosynthesis; L-arginine biosynthesis; L-arginine from L-ornithine and carbamoyl phosphate: step 3/3. In Lactococcus lactis subsp. cremoris (strain MG1363), this protein is Argininosuccinate lyase.